Consider the following 361-residue polypeptide: Queuine tRNA-ribosyltransferase (361 aa).

Asp-92 acts as the Proton acceptor in catalysis. Residues 92–96 (DSGGF), Asp-146, Gln-189, and Gly-216 contribute to the substrate site. The tract at residues 247–253 (GVGKPAD) is RNA binding. The active-site Nucleophile is Asp-266. Residues 271–275 (TRSGR) form an RNA binding; important for wobble base 34 recognition region. Zn(2+) contacts are provided by Cys-304, Cys-306, Cys-309, and His-335.

Belongs to the queuine tRNA-ribosyltransferase family. Homodimer. Within each dimer, one monomer is responsible for RNA recognition and catalysis, while the other monomer binds to the replacement base PreQ1. It depends on Zn(2+) as a cofactor.

It catalyses the reaction 7-aminomethyl-7-carbaguanine + guanosine(34) in tRNA = 7-aminomethyl-7-carbaguanosine(34) in tRNA + guanine. It participates in tRNA modification; tRNA-queuosine biosynthesis. Catalyzes the base-exchange of a guanine (G) residue with the queuine precursor 7-aminomethyl-7-deazaguanine (PreQ1) at position 34 (anticodon wobble position) in tRNAs with GU(N) anticodons (tRNA-Asp, -Asn, -His and -Tyr). Catalysis occurs through a double-displacement mechanism. The nucleophile active site attacks the C1' of nucleotide 34 to detach the guanine base from the RNA, forming a covalent enzyme-RNA intermediate. The proton acceptor active site deprotonates the incoming PreQ1, allowing a nucleophilic attack on the C1' of the ribose to form the product. After dissociation, two additional enzymatic reactions on the tRNA convert PreQ1 to queuine (Q), resulting in the hypermodified nucleoside queuosine (7-(((4,5-cis-dihydroxy-2-cyclopenten-1-yl)amino)methyl)-7-deazaguanosine). This chain is Queuine tRNA-ribosyltransferase, found in Rickettsia rickettsii (strain Iowa).